Consider the following 55-residue polypeptide: UPF0391 membrane protein NE1120 (55 aa).

A run of 2 helical transmembrane segments spans residues 4 to 24 (MALV…AGIA) and 27 to 47 (LAWA…VFYL).

The protein belongs to the UPF0391 family.

It is found in the cell membrane. This is UPF0391 membrane protein NE1120 from Nitrosomonas europaea (strain ATCC 19718 / CIP 103999 / KCTC 2705 / NBRC 14298).